The following is a 1177-amino-acid chain: DNA-directed RNA polymerase subunit beta' (1177 aa).

The Zn(2+) site is built by C60, C62, C75, and C78. 3 residues coordinate Mg(2+): D450, D452, and D454. Residues C795, C869, C876, and C879 each coordinate Zn(2+).

This sequence belongs to the RNA polymerase beta' chain family. As to quaternary structure, the RNAP catalytic core consists of 2 alpha, 1 beta, 1 beta' and 1 omega subunit. When a sigma factor is associated with the core the holoenzyme is formed, which can initiate transcription. Requires Mg(2+) as cofactor. It depends on Zn(2+) as a cofactor.

The catalysed reaction is RNA(n) + a ribonucleoside 5'-triphosphate = RNA(n+1) + diphosphate. Its function is as follows. DNA-dependent RNA polymerase catalyzes the transcription of DNA into RNA using the four ribonucleoside triphosphates as substrates. The sequence is that of DNA-directed RNA polymerase subunit beta' from Clostridium botulinum (strain Eklund 17B / Type B).